The following is a 687-amino-acid chain: DNA ligase (687 aa).

NAD(+) contacts are provided by residues 33-37, 83-84, and E113; these read DAEFD and SL. K115 (N6-AMP-lysine intermediate) is an active-site residue. The NAD(+) site is built by R136, E176, K292, and K316. C410, C413, C429, and C435 together coordinate Zn(2+). The BRCT domain occupies 599-687; it reads SVPRTLAGVT…GPPAEVGEPT (89 aa).

This sequence belongs to the NAD-dependent DNA ligase family. LigA subfamily. Requires Mg(2+) as cofactor. Mn(2+) is required as a cofactor.

It carries out the reaction NAD(+) + (deoxyribonucleotide)n-3'-hydroxyl + 5'-phospho-(deoxyribonucleotide)m = (deoxyribonucleotide)n+m + AMP + beta-nicotinamide D-nucleotide.. DNA ligase that catalyzes the formation of phosphodiester linkages between 5'-phosphoryl and 3'-hydroxyl groups in double-stranded DNA using NAD as a coenzyme and as the energy source for the reaction. It is essential for DNA replication and repair of damaged DNA. In Mycobacterium marinum (strain ATCC BAA-535 / M), this protein is DNA ligase.